The primary structure comprises 236 residues: Phosphoribosylaminoimidazole-succinocarboxamide synthase (236 aa).

The protein belongs to the SAICAR synthetase family.

The catalysed reaction is 5-amino-1-(5-phospho-D-ribosyl)imidazole-4-carboxylate + L-aspartate + ATP = (2S)-2-[5-amino-1-(5-phospho-beta-D-ribosyl)imidazole-4-carboxamido]succinate + ADP + phosphate + 2 H(+). The protein operates within purine metabolism; IMP biosynthesis via de novo pathway; 5-amino-1-(5-phospho-D-ribosyl)imidazole-4-carboxamide from 5-amino-1-(5-phospho-D-ribosyl)imidazole-4-carboxylate: step 1/2. The polypeptide is Phosphoribosylaminoimidazole-succinocarboxamide synthase (Pseudomonas syringae pv. syringae (strain B728a)).